We begin with the raw amino-acid sequence, 550 residues long: Transcriptional repressor RHIT (550 aa).

Disordered regions lie at residues Met1–Ala67, Val174–Val200, and Lys216–Ala296. 3 stretches are compositionally biased toward basic and acidic residues: residues Ala11–Gly22, Glu45–Pro58, and Leu187–Val200. One can recognise a KRAB domain in the interval Val124–Glu193. Lys216 is covalently cross-linked (Glycyl lysine isopeptide (Lys-Gly) (interchain with G-Cter in SUMO2)). Basic and acidic residues predominate over residues Asp267–Arg281. A Phosphoserine modification is found at Ser290. 8 C2H2-type zinc fingers span residues Tyr306–His328, Tyr334–His356, Tyr362–His384, Tyr390–His412, His418–His440, Tyr446–His468, Tyr474–His496, and Tyr502–His524.

The protein belongs to the krueppel C2H2-type zinc-finger protein family.

The protein localises to the nucleus. Its function is as follows. Transcriptional repressor involved in regulating MPV17L expression. By regulating MPV17L expression, contributes to the regulation of genes involved in H(2)O(2) metabolism and the mitochondrial apoptotic cascade. In Bos taurus (Bovine), this protein is Transcriptional repressor RHIT (ZNF205).